A 243-amino-acid chain; its full sequence is Uridylate kinase (243 aa).

Residue 15-18 (KLSG) coordinates ATP. Residues 23-28 (GEEGFG) form an involved in allosteric activation by GTP region. Position 57 (glycine 57) interacts with UMP. The ATP site is built by glycine 58 and arginine 62. UMP-binding positions include aspartate 77 and 138–145 (TGNPFFTT). Residues threonine 165, phenylalanine 171, and aspartate 174 each contribute to the ATP site.

It belongs to the UMP kinase family. Homohexamer.

The protein localises to the cytoplasm. It catalyses the reaction UMP + ATP = UDP + ADP. It participates in pyrimidine metabolism; CTP biosynthesis via de novo pathway; UDP from UMP (UMPK route): step 1/1. Its activity is regulated as follows. Allosterically activated by GTP. Inhibited by UTP. In terms of biological role, catalyzes the reversible phosphorylation of UMP to UDP. The chain is Uridylate kinase from Aliivibrio fischeri (strain ATCC 700601 / ES114) (Vibrio fischeri).